A 116-amino-acid polypeptide reads, in one-letter code: UPF0122 protein CA_C1753 (116 aa).

The protein belongs to the UPF0122 family.

In terms of biological role, might take part in the signal recognition particle (SRP) pathway. This is inferred from the conservation of its genetic proximity to ftsY/ffh. May be a regulatory protein. The polypeptide is UPF0122 protein CA_C1753 (Clostridium acetobutylicum (strain ATCC 824 / DSM 792 / JCM 1419 / IAM 19013 / LMG 5710 / NBRC 13948 / NRRL B-527 / VKM B-1787 / 2291 / W)).